Consider the following 342-residue polypeptide: NAD kinase (342 aa).

The Proton acceptor role is filled by Asp66. Residues 66–67, Arg71, 141–142, Lys152, Asp171, 182–187, and Ala206 each bind NAD(+); these read DG, ND, and TAYAFS.

Belongs to the NAD kinase family. A divalent metal cation serves as cofactor.

It is found in the cytoplasm. It carries out the reaction NAD(+) + ATP = ADP + NADP(+) + H(+). Involved in the regulation of the intracellular balance of NAD and NADP, and is a key enzyme in the biosynthesis of NADP. Catalyzes specifically the phosphorylation on 2'-hydroxyl of the adenosine moiety of NAD to yield NADP. The protein is NAD kinase of Bifidobacterium longum (strain NCC 2705).